The following is a 581-amino-acid chain: Threonine--tRNA ligase (581 aa).

The segment at 185-478 (DHRKLGKELD…LVEHYGGAFP (294 aa)) is catalytic. 3 residues coordinate Zn(2+): Cys278, His329, and His455.

Belongs to the class-II aminoacyl-tRNA synthetase family. As to quaternary structure, homodimer. Zn(2+) serves as cofactor.

Its subcellular location is the cytoplasm. It catalyses the reaction tRNA(Thr) + L-threonine + ATP = L-threonyl-tRNA(Thr) + AMP + diphosphate + H(+). Its function is as follows. Catalyzes the attachment of threonine to tRNA(Thr) in a two-step reaction: L-threonine is first activated by ATP to form Thr-AMP and then transferred to the acceptor end of tRNA(Thr). Also edits incorrectly charged L-seryl-tRNA(Thr). The sequence is that of Threonine--tRNA ligase from Borreliella burgdorferi (strain ATCC 35210 / DSM 4680 / CIP 102532 / B31) (Borrelia burgdorferi).